The chain runs to 144 residues: uncharacterized protein (144 aa).

A disordered region spans residues 90 to 144 (KKEYSALKKSGKIHKVGGSKSSGHRKTKKPKKSMKGGSKTKKLSEKQLMKELLAM). Residues 98 to 130 (KSGKIHKVGGSKSSGHRKTKKPKKSMKGGSKTK) are compositionally biased toward basic residues.

This is an uncharacterized protein from Sputnik virophage.